Reading from the N-terminus, the 534-residue chain is Cytochrome P450 714B1 (534 aa).

M1 is a topological domain (lumenal). The chain crosses the membrane as a helical; Signal-anchor for type III membrane protein span at residues 2-22 (VVVVAAAMAAASLCCGVAAYL). Residues 23-534 (YYVLWLAPER…RSKCDWAGFD (512 aa)) are Cytoplasmic-facing. C472 provides a ligand contact to heme.

The protein belongs to the cytochrome P450 family. Heme is required as a cofactor. Highly expressed in spikelet and uppermost internode. Detected in shoots, roots, leaves and anthers.

The protein localises to the membrane. Functionally, catalyzes the 13-hydroxylation of gibberellins (GAs). Determines the ratio of GA4 and GA1. Converts GA12 into GA53. This is Cytochrome P450 714B1 (CYP714B1) from Oryza sativa subsp. japonica (Rice).